The sequence spans 442 residues: Phosphoglucosamine mutase (442 aa).

S98 serves as the catalytic Phosphoserine intermediate. 4 residues coordinate Mg(2+): S98, D236, D238, and D240. A Phosphoserine modification is found at S98.

It belongs to the phosphohexose mutase family. Requires Mg(2+) as cofactor. Post-translationally, activated by phosphorylation.

The catalysed reaction is alpha-D-glucosamine 1-phosphate = D-glucosamine 6-phosphate. Catalyzes the conversion of glucosamine-6-phosphate to glucosamine-1-phosphate. This chain is Phosphoglucosamine mutase, found in Natranaerobius thermophilus (strain ATCC BAA-1301 / DSM 18059 / JW/NM-WN-LF).